The primary structure comprises 377 residues: Glutamate 5-kinase (377 aa).

Residue lysine 22 participates in ATP binding. Positions 62, 149, and 161 each coordinate substrate. ATP contacts are provided by residues 181–182 (TD) and 223–229 (TGGMVTK). The PUA domain occupies 285–363 (RGTIVVDAGA…AQLKRFLGPQ (79 aa)).

Belongs to the glutamate 5-kinase family.

The protein localises to the cytoplasm. The enzyme catalyses L-glutamate + ATP = L-glutamyl 5-phosphate + ADP. It participates in amino-acid biosynthesis; L-proline biosynthesis; L-glutamate 5-semialdehyde from L-glutamate: step 1/2. Its function is as follows. Catalyzes the transfer of a phosphate group to glutamate to form L-glutamate 5-phosphate. This Bifidobacterium longum (strain DJO10A) protein is Glutamate 5-kinase.